The primary structure comprises 431 residues: Serine--tRNA ligase (431 aa).

237-239 contacts L-serine; that stretch reads TAE. 268–270 provides a ligand contact to ATP; that stretch reads RSE. An L-serine-binding site is contributed by Glu-291. 355-358 serves as a coordination point for ATP; it reads EISS. Ser-390 is a binding site for L-serine.

This sequence belongs to the class-II aminoacyl-tRNA synthetase family. Type-1 seryl-tRNA synthetase subfamily. Homodimer. The tRNA molecule binds across the dimer.

The protein localises to the cytoplasm. It catalyses the reaction tRNA(Ser) + L-serine + ATP = L-seryl-tRNA(Ser) + AMP + diphosphate + H(+). It carries out the reaction tRNA(Sec) + L-serine + ATP = L-seryl-tRNA(Sec) + AMP + diphosphate + H(+). The protein operates within aminoacyl-tRNA biosynthesis; selenocysteinyl-tRNA(Sec) biosynthesis; L-seryl-tRNA(Sec) from L-serine and tRNA(Sec): step 1/1. Its function is as follows. Catalyzes the attachment of serine to tRNA(Ser). Is also able to aminoacylate tRNA(Sec) with serine, to form the misacylated tRNA L-seryl-tRNA(Sec), which will be further converted into selenocysteinyl-tRNA(Sec). In Neisseria meningitidis serogroup A / serotype 4A (strain DSM 15465 / Z2491), this protein is Serine--tRNA ligase.